The primary structure comprises 333 residues: Ribosomal RNA large subunit methyltransferase F (333 aa).

Residues 1–10 (MPQPPKRPRK) show a composition bias toward basic residues. Residues 1–31 (MPQPPKRPRKPAPAAVKTAPAKGELHPRNRH) form a disordered region. Low complexity predominate over residues 12 to 22 (APAAVKTAPAK).

It belongs to the methyltransferase superfamily. METTL16/RlmF family.

It localises to the cytoplasm. The enzyme catalyses adenosine(1618) in 23S rRNA + S-adenosyl-L-methionine = N(6)-methyladenosine(1618) in 23S rRNA + S-adenosyl-L-homocysteine + H(+). In terms of biological role, specifically methylates the adenine in position 1618 of 23S rRNA. The chain is Ribosomal RNA large subunit methyltransferase F from Ectopseudomonas mendocina (strain ymp) (Pseudomonas mendocina).